We begin with the raw amino-acid sequence, 430 residues long: Carbamoyl phosphate synthase arginine-specific small chain (430 aa).

Residues 1 to 9 (MLSATKRYL) constitute a mitochondrion transit peptide. In terms of domain architecture, Glutamine amidotransferase type-1 spans 219-407 (HIAVLDCGAK…FDNINVYKKS (189 aa)). Cys-296 serves as the catalytic Nucleophile. Residues His-380 and Glu-382 contribute to the active site.

Belongs to the CarA family. Heterodimer composed of 2 chains; the small (or glutamine) chain promotes the hydrolysis of glutamine to ammonia, which is used by the large (or ammonia) chain to synthesize carbamoyl phosphate.

Its subcellular location is the mitochondrion matrix. It catalyses the reaction hydrogencarbonate + L-glutamine + 2 ATP + H2O = carbamoyl phosphate + L-glutamate + 2 ADP + phosphate + 2 H(+). It carries out the reaction L-glutamine + H2O = L-glutamate + NH4(+). The protein operates within amino-acid biosynthesis; L-arginine biosynthesis; carbamoyl phosphate from bicarbonate: step 1/1. In terms of biological role, small subunit of the arginine-specific carbamoyl phosphate synthase (CPSase). CPSase catalyzes the formation of carbamoyl phosphate from the ammonia moiety of glutamine, carbonate, and phosphate donated by ATP, the first step of the arginine biosynthetic pathway. The small subunit (glutamine amidotransferase) binds and cleaves glutamine to supply the large subunit with the substrate ammonia. This Candida albicans (strain SC5314 / ATCC MYA-2876) (Yeast) protein is Carbamoyl phosphate synthase arginine-specific small chain (CPA1).